The following is a 94-amino-acid chain: Small ribosomal subunit protein uS19c (94 aa).

It belongs to the universal ribosomal protein uS19 family.

It is found in the plastid. The protein localises to the chloroplast. In terms of biological role, protein S19 forms a complex with S13 that binds strongly to the 16S ribosomal RNA. This is Small ribosomal subunit protein uS19c from Cyanidioschyzon merolae (strain NIES-3377 / 10D) (Unicellular red alga).